The primary structure comprises 72 residues: Large ribosomal subunit protein bL31 (72 aa).

Zn(2+) is bound by residues Cys17, Cys19, Cys37, and Cys40.

It belongs to the bacterial ribosomal protein bL31 family. Type A subfamily. As to quaternary structure, part of the 50S ribosomal subunit. Requires Zn(2+) as cofactor.

In terms of biological role, binds the 23S rRNA. The sequence is that of Large ribosomal subunit protein bL31 from Clostridium botulinum (strain Loch Maree / Type A3).